We begin with the raw amino-acid sequence, 506 residues long: Cysteine--tRNA ligase (506 aa).

Cys43 contributes to the Zn(2+) binding site. Positions 45 to 55 (VTVYDLCHLGH) match the 'HIGH' region motif. Zn(2+) is bound by residues Cys237, His262, and Glu266. The 'KMSKS' region motif lies at 294 to 298 (KMSKS). Position 297 (Lys297) interacts with ATP.

The protein belongs to the class-I aminoacyl-tRNA synthetase family. In terms of assembly, monomer. The cofactor is Zn(2+).

The protein resides in the cytoplasm. The enzyme catalyses tRNA(Cys) + L-cysteine + ATP = L-cysteinyl-tRNA(Cys) + AMP + diphosphate. In Synechococcus sp. (strain JA-3-3Ab) (Cyanobacteria bacterium Yellowstone A-Prime), this protein is Cysteine--tRNA ligase.